The sequence spans 481 residues: Protein FIZZY-RELATED 3 (481 aa).

A disordered region spans residues 100-165; that stretch reads PAGGQGSASS…RKVPKTPHKV (66 aa). A compositionally biased stretch (low complexity) spans 125–136; sequence SNSSPSSPFSPS. The segment covering 154 to 163 has biased composition (basic residues); the sequence is PPRKVPKTPH. WD repeat units follow at residues 172–209, 213–252, 255–292, 296–335, 338–380, 382–423, and 426–465; these read QDDF…VTKL, GPND…RVRT, GHQT…DFVS, GHKS…PILK, EHTA…QLNS, DTGS…KVAT, and GHSM…KMQT.

Belongs to the WD repeat CDC20/Fizzy family. In terms of assembly, associates with the APC/C complex. Interacts with CDC20-1, CDC20-2, CYCA1-1, CYCA3-4, CYCB1-1 and CYCB1-2. Binds to GIG1 and PYM.

It participates in protein modification; protein ubiquitination. Its function is as follows. Activator protein that regulates the ubiquitin ligase activity and substrate specificity of the anaphase promoting complex/cyclosome (APC/C). This is Protein FIZZY-RELATED 3 (FZR3) from Arabidopsis thaliana (Mouse-ear cress).